The following is a 390-amino-acid chain: METFLFTSESVNEGHPDKLCDQVSDAILDACLEQDPESKVACETCTKTNMVMVFGEITTKAKVDYEKIVRDTCRGIGFTSADVGLDADHCKVLVNIEQQSPDIAQGVHGHLTKKPEEIGAGDQGHMFGYATDETPELMPLTHVLATQLGAKLTEVRKNKTCPWLRPDGKTQVTVEYKNDNGAMVPIRVHTVLISTQHDEGVTNEQIAQDLKEHVIKPVIPAKYLDENTIFHLNPSGRFVIGGPHGDAGLTGRKIIIDTYGGWGAHGEGAFSGKDPTKVDRSGAYIVRQAAKSVVAAGLARRCIVQVSYAIGVAEPLSVFVDTYKTGTIPDKDILALIKENFDFRPGMIAINLDLLRGGNFRYQKTAAYGHFGRDEADFTWETVKALKPKA.

Glutamate 9 is a binding site for Mg(2+). Residue histidine 15 coordinates ATP. Glutamate 43 lines the K(+) pocket. Positions 56 and 99 each coordinate L-methionine. Residues 167 to 169, 235 to 238, aspartate 246, 252 to 253, alanine 269, lysine 273, and lysine 277 each bind ATP; these read DGK, SGRF, and RK. Position 246 (aspartate 246) interacts with L-methionine. An L-methionine-binding site is contributed by lysine 277.

This sequence belongs to the AdoMet synthase family. As to quaternary structure, homotetramer. Mn(2+) serves as cofactor. The cofactor is Mg(2+). Co(2+) is required as a cofactor. It depends on K(+) as a cofactor.

The protein resides in the cytoplasm. The enzyme catalyses L-methionine + ATP + H2O = S-adenosyl-L-methionine + phosphate + diphosphate. Its pathway is amino-acid biosynthesis; S-adenosyl-L-methionine biosynthesis; S-adenosyl-L-methionine from L-methionine: step 1/1. In terms of biological role, catalyzes the formation of S-adenosylmethionine from methionine and ATP. The reaction comprises two steps that are both catalyzed by the same enzyme: formation of S-adenosylmethionine (AdoMet) and triphosphate, and subsequent hydrolysis of the triphosphate. This is S-adenosylmethionine synthase 2 (SAMS2) from Nicotiana tabacum (Common tobacco).